The chain runs to 113 residues: Hydrogenase maturation factor HypA (113 aa).

H2 contributes to the Ni(2+) binding site. Zn(2+) is bound by residues C73, C76, C89, and C92.

Belongs to the HypA/HybF family.

Its function is as follows. Involved in the maturation of [NiFe] hydrogenases. Required for nickel insertion into the metal center of the hydrogenase. The sequence is that of Hydrogenase maturation factor HypA from Acidithiobacillus ferrooxidans (strain ATCC 23270 / DSM 14882 / CIP 104768 / NCIMB 8455) (Ferrobacillus ferrooxidans (strain ATCC 23270)).